The chain runs to 530 residues: Autoinducer-2 kinase (530 aa).

The protein belongs to the FGGY kinase family.

The protein resides in the cytoplasm. It catalyses the reaction (S)-4,5-dihydroxypentane-2,3-dione + ATP = (2S)-2-hydroxy-3,4-dioxopentyl phosphate + ADP + H(+). Catalyzes the phosphorylation of autoinducer-2 (AI-2) to phospho-AI-2, which subsequently inactivates the transcriptional regulator LsrR and leads to the transcription of the lsr operon. Phosphorylates the ring-open form of (S)-4,5-dihydroxypentane-2,3-dione (DPD), which is the precursor to all AI-2 signaling molecules, at the C5 position. This is Autoinducer-2 kinase from Yersinia pestis bv. Antiqua (strain Angola).